The following is a 921-amino-acid chain: Leucine--tRNA ligase (921 aa).

Positions 80–90 (PYPSGKLHMGH) match the 'HIGH' region motif. Residues 667-671 (KMSKS) carry the 'KMSKS' region motif. Lys-670 contributes to the ATP binding site.

It belongs to the class-I aminoacyl-tRNA synthetase family.

It is found in the cytoplasm. It carries out the reaction tRNA(Leu) + L-leucine + ATP = L-leucyl-tRNA(Leu) + AMP + diphosphate. This is Leucine--tRNA ligase from Psychrobacter arcticus (strain DSM 17307 / VKM B-2377 / 273-4).